The chain runs to 424 residues: Light-independent protochlorophyllide reductase subunit N (424 aa).

Residues cysteine 27, cysteine 52, and cysteine 113 each contribute to the [4Fe-4S] cluster site.

This sequence belongs to the BchN/ChlN family. As to quaternary structure, protochlorophyllide reductase is composed of three subunits; BchL, BchN and BchB. Forms a heterotetramer of two BchB and two BchN subunits. It depends on [4Fe-4S] cluster as a cofactor.

It catalyses the reaction chlorophyllide a + oxidized 2[4Fe-4S]-[ferredoxin] + 2 ADP + 2 phosphate = protochlorophyllide a + reduced 2[4Fe-4S]-[ferredoxin] + 2 ATP + 2 H2O. It functions in the pathway porphyrin-containing compound metabolism; bacteriochlorophyll biosynthesis (light-independent). Component of the dark-operative protochlorophyllide reductase (DPOR) that uses Mg-ATP and reduced ferredoxin to reduce ring D of protochlorophyllide (Pchlide) to form chlorophyllide a (Chlide). This reaction is light-independent. The NB-protein (BchN-BchB) is the catalytic component of the complex. This is Light-independent protochlorophyllide reductase subunit N from Halorhodospira halophila (strain DSM 244 / SL1) (Ectothiorhodospira halophila (strain DSM 244 / SL1)).